Reading from the N-terminus, the 89-residue chain is Large ribosomal subunit protein bL27 (89 aa).

The tract at residues 1–26 (MATKKAGGSSKNGRDSAGRRLGLKKS) is disordered.

This sequence belongs to the bacterial ribosomal protein bL27 family.

This is Large ribosomal subunit protein bL27 from Orientia tsutsugamushi (strain Ikeda) (Rickettsia tsutsugamushi).